Reading from the N-terminus, the 256-residue chain is Transcription factor CAULIFLOWER (256 aa).

Residues 1 to 61 (MGRGRVQLKR…GKLFEYTSES (61 aa)) enclose the MADS-box domain. Positions 90 to 180 (QPNWSMEYSR…TKQIKERENI (91 aa)) constitute a K-box domain.

Homodimer capable of binding to CArG-box sequences.

Its subcellular location is the nucleus. Functionally, probable transcription factor that promotes early floral meristem identity in synergy with APETALA1, FRUITFULL and LEAFY. Is required subsequently for the transition of an inflorescence meristem into a floral meristem. Seems to be partially redundant to the function of APETALA1. This Arabidopsis lyrata subsp. lyrata (Lyre-leaved rock-cress) protein is Transcription factor CAULIFLOWER (CAL).